Reading from the N-terminus, the 313-residue chain is Probable cell division protein WhiA (313 aa).

Residues 277–311 (SLKEVAAQVPDGPISKSGVNHRFQKIREMAQQLKE) constitute a DNA-binding region (H-T-H motif).

It belongs to the WhiA family.

Its function is as follows. Involved in cell division and chromosome segregation. The chain is Probable cell division protein WhiA from Lactobacillus gasseri (strain ATCC 33323 / DSM 20243 / BCRC 14619 / CIP 102991 / JCM 1131 / KCTC 3163 / NCIMB 11718 / NCTC 13722 / AM63).